Reading from the N-terminus, the 115-residue chain is Large ribosomal subunit protein bL20c (115 aa).

This sequence belongs to the bacterial ribosomal protein bL20 family.

It is found in the plastid. The protein localises to the chloroplast. In terms of biological role, binds directly to 23S ribosomal RNA and is necessary for the in vitro assembly process of the 50S ribosomal subunit. It is not involved in the protein synthesizing functions of that subunit. The protein is Large ribosomal subunit protein bL20c of Gnetum parvifolium (Small-leaved jointfir).